We begin with the raw amino-acid sequence, 365 residues long: Phosphoserine aminotransferase (365 aa).

Residue Arg-40 coordinates L-glutamate. Pyridoxal 5'-phosphate contacts are provided by residues 74–75 (AS), Phe-99, Thr-155, Asp-177, and Gln-200. Position 201 is an N6-(pyridoxal phosphate)lysine (Lys-201). 241–242 (NT) lines the pyridoxal 5'-phosphate pocket.

Belongs to the class-V pyridoxal-phosphate-dependent aminotransferase family. SerC subfamily. In terms of assembly, homodimer. The cofactor is pyridoxal 5'-phosphate.

Its subcellular location is the cytoplasm. It catalyses the reaction O-phospho-L-serine + 2-oxoglutarate = 3-phosphooxypyruvate + L-glutamate. It carries out the reaction 4-(phosphooxy)-L-threonine + 2-oxoglutarate = (R)-3-hydroxy-2-oxo-4-phosphooxybutanoate + L-glutamate. It participates in amino-acid biosynthesis; L-serine biosynthesis; L-serine from 3-phospho-D-glycerate: step 2/3. Catalyzes the reversible conversion of 3-phosphohydroxypyruvate to phosphoserine and of 3-hydroxy-2-oxo-4-phosphonooxybutanoate to phosphohydroxythreonine. In Lactococcus lactis subsp. lactis (strain IL1403) (Streptococcus lactis), this protein is Phosphoserine aminotransferase.